The primary structure comprises 468 residues: Glutamate--tRNA ligase 2 (468 aa).

The short motif at 11–21 is the 'HIGH' region element; sequence PSPTGFLHIGG. Residues 239–243 carry the 'KMSKS' region motif; it reads KLSKR. Position 242 (lysine 242) interacts with ATP.

The protein belongs to the class-I aminoacyl-tRNA synthetase family. Glutamate--tRNA ligase type 1 subfamily. In terms of assembly, monomer.

The protein resides in the cytoplasm. It catalyses the reaction tRNA(Glu) + L-glutamate + ATP = L-glutamyl-tRNA(Glu) + AMP + diphosphate. In terms of biological role, catalyzes the attachment of glutamate to tRNA(Glu) in a two-step reaction: glutamate is first activated by ATP to form Glu-AMP and then transferred to the acceptor end of tRNA(Glu). The protein is Glutamate--tRNA ligase 2 of Ruegeria pomeroyi (strain ATCC 700808 / DSM 15171 / DSS-3) (Silicibacter pomeroyi).